A 506-amino-acid polypeptide reads, in one-letter code: MTAPKPVVLCILDGWGLRAEREANAVALANTPTFDRLMATCPNATLITHGPDVGLPRGQMGNSEVGHTNIGAGRVVAMDLGAIDLAIEEGTFARNPALCDFIAKVKAKGGTAHLMGVVSDGGVHGHIQHLIAAVEVIAASGVPVVIHAITDGRDVAPTSAGGFVQQLAEALPAGASIGTVIGRYWAMDRDKRWDRVKRASDAMLHGQGERAADAVAAVAAALARGETDEFIAPTVIGSYTGAMDGDGFFCLNFRADRAREILAGLAQPGFDAYDTGRRPDWSGFLGMVDYSTEHDRFMTTAYPKQVIRNTLGEWVASHGLRQFRIAETEKYPHVTFFLNGGKEVPEAGEDRYMANSPKVATYDLKPEMSAPDVSDHLVQAIGEGYDLIVVNYANPDMVGHTGDLRAAMAACEEVDRGLGRAVEAVRQAGGAMIVTADHGNCETMIDPETGGPHTAHTTNPVPVILVGGPAGARLRAGRLADLAPTLLELMGLPQPEEMTGRSLIEA.

Mn(2+) contacts are provided by D13 and S63. S63 (phosphoserine intermediate) is an active-site residue. Residues H124, 153-154 (RD), R183, R189, 254-257 (RADR), and K330 each bind substrate. The Mn(2+) site is built by D396, H400, D437, H438, and H456.

Belongs to the BPG-independent phosphoglycerate mutase family. Monomer. Mn(2+) is required as a cofactor.

It catalyses the reaction (2R)-2-phosphoglycerate = (2R)-3-phosphoglycerate. It participates in carbohydrate degradation; glycolysis; pyruvate from D-glyceraldehyde 3-phosphate: step 3/5. Functionally, catalyzes the interconversion of 2-phosphoglycerate and 3-phosphoglycerate. This is 2,3-bisphosphoglycerate-independent phosphoglycerate mutase from Cereibacter sphaeroides (strain ATCC 17025 / ATH 2.4.3) (Rhodobacter sphaeroides).